A 228-amino-acid chain; its full sequence is 2,3-bisphosphoglycerate-dependent phosphoglycerate mutase (228 aa).

Residues R8–N15, T21–G22, R60, E87–Y90, K98, R114–R115, and G183–N184 each bind substrate. H9 functions as the Tele-phosphohistidine intermediate in the catalytic mechanism. E87 acts as the Proton donor/acceptor in catalysis.

It belongs to the phosphoglycerate mutase family. BPG-dependent PGAM subfamily.

It carries out the reaction (2R)-2-phosphoglycerate = (2R)-3-phosphoglycerate. It participates in carbohydrate degradation; glycolysis; pyruvate from D-glyceraldehyde 3-phosphate: step 3/5. In terms of biological role, catalyzes the interconversion of 2-phosphoglycerate and 3-phosphoglycerate. This Enterococcus faecalis (strain ATCC 700802 / V583) protein is 2,3-bisphosphoglycerate-dependent phosphoglycerate mutase.